The sequence spans 221 residues: Deoxyribose-phosphate aldolase 1 (221 aa).

Asp-89 functions as the Proton donor/acceptor in the catalytic mechanism. The active-site Schiff-base intermediate with acetaldehyde is Lys-152. The Proton donor/acceptor role is filled by Lys-181.

It belongs to the DeoC/FbaB aldolase family. DeoC type 1 subfamily.

The protein localises to the cytoplasm. It carries out the reaction 2-deoxy-D-ribose 5-phosphate = D-glyceraldehyde 3-phosphate + acetaldehyde. It participates in carbohydrate degradation; 2-deoxy-D-ribose 1-phosphate degradation; D-glyceraldehyde 3-phosphate and acetaldehyde from 2-deoxy-alpha-D-ribose 1-phosphate: step 2/2. Catalyzes a reversible aldol reaction between acetaldehyde and D-glyceraldehyde 3-phosphate to generate 2-deoxy-D-ribose 5-phosphate. This chain is Deoxyribose-phosphate aldolase 1, found in Oceanobacillus iheyensis (strain DSM 14371 / CIP 107618 / JCM 11309 / KCTC 3954 / HTE831).